Consider the following 1064-residue polypeptide: DNA-directed RNA polymerase subunit beta (1064 aa).

This sequence belongs to the RNA polymerase beta chain family. In plastids the minimal PEP RNA polymerase catalytic core is composed of four subunits: alpha, beta, beta', and beta''. When a (nuclear-encoded) sigma factor is associated with the core the holoenzyme is formed, which can initiate transcription.

It localises to the plastid. It is found in the chloroplast. It catalyses the reaction RNA(n) + a ribonucleoside 5'-triphosphate = RNA(n+1) + diphosphate. Functionally, DNA-dependent RNA polymerase catalyzes the transcription of DNA into RNA using the four ribonucleoside triphosphates as substrates. The sequence is that of DNA-directed RNA polymerase subunit beta from Jasminum nudiflorum (Winter jasmine).